A 774-amino-acid chain; its full sequence is Ras and Rab interactor 1 (774 aa).

Met1 carries the post-translational modification N-acetylmethionine. The segment at 1-52 (MEDPGETEAHPLGATSLNFVPGYQQEEKPSPDPLYDTPDARGVQAGGSQQPA) is disordered. At Ser16 the chain carries Phosphoserine. Phosphotyrosine; by ABL1 and ABL2 is present on Tyr35. The region spanning 68–162 (WLQLRANAAA…ILLLPLPLPR (95 aa)) is the SH2 domain. Disordered regions lie at residues 188–211 (LNTK…RSPQ) and 249–342 (STET…RPRH). Ser209, Ser257, Ser330, and Ser334 each carry phosphoserine. Over residues 256 to 268 (LSPPAVPPPPVPV) the composition is skewed to pro residues. The segment covering 327–337 (SSGSPTTSPRL) has biased composition (low complexity). Position 351 is a phosphoserine; by PKD/PRKD1 (Ser351). The region spanning 456–598 (LSTDGSLGRL…LSGLSQAHAL (143 aa)) is the VPS9 domain. Ser609 is subject to Phosphoserine. In terms of domain architecture, Ras-associating spans 624 to 706 (FQHLLRVAYQ…GYLIYRRAER (83 aa)). Residue Arg692 is modified to Omega-N-methylarginine. Basic and acidic residues predominate over residues 704-766 (AERPETQRAA…GHMQLEEQKA (63 aa)). The segment at 704-774 (AERPETQRAA…KAEGCPALEE (71 aa)) is disordered.

It belongs to the RIN (Ras interaction/interference) family. As to quaternary structure, interacts with the GTP-bound form of Ras proteins (NRAS, HRAS and KRAS). This interaction prevents the association between RAF1 and Ras. Interacts with 14-3-3 proteins YWHAB, YWHAE and YWHAZ when phosphorylated on Ser-351. Interacts with the SH3 domain of ABL1 and ABL2. Interacts with RAB5A. The interaction with Ras is probably regulated and antagonized by the interaction with 14-3-3 proteins. The interaction with 14-3-3 proteins is regulated by phosphorylation on Ser-351. In terms of processing, phosphorylated on tyrosine residues by ABL1 and ABL2. Phosphorylation at Ser-351 by PRKD1 induces interaction with 14-3-3 proteins.

The protein localises to the cytoplasm. It localises to the membrane. Its subcellular location is the cytoskeleton. Its function is as follows. Ras effector protein, which may serve as an inhibitory modulator of neuronal plasticity in aversive memory formation. Can affect Ras signaling at different levels. First, by competing with RAF1 protein for binding to activated Ras. Second, by enhancing signaling from ABL1 and ABL2, which regulate cytoskeletal remodeling. Third, by activating RAB5A, possibly by functioning as a guanine nucleotide exchange factor (GEF) for RAB5A, by exchanging bound GDP for free GTP, and facilitating Ras-activated receptor endocytosis. The chain is Ras and Rab interactor 1 (Rin1) from Rattus norvegicus (Rat).